The chain runs to 298 residues: Acetylglutamate kinase (298 aa).

Substrate is bound by residues 69-70, Arg-91, and Asn-196; that span reads GG.

It belongs to the acetylglutamate kinase family. ArgB subfamily.

Its subcellular location is the cytoplasm. The catalysed reaction is N-acetyl-L-glutamate + ATP = N-acetyl-L-glutamyl 5-phosphate + ADP. It functions in the pathway amino-acid biosynthesis; L-arginine biosynthesis; N(2)-acetyl-L-ornithine from L-glutamate: step 2/4. Its function is as follows. Catalyzes the ATP-dependent phosphorylation of N-acetyl-L-glutamate. The sequence is that of Acetylglutamate kinase from Rhodopseudomonas palustris (strain ATCC BAA-98 / CGA009).